The chain runs to 455 residues: Probable glycine dehydrogenase (decarboxylating) subunit 1 (455 aa).

Belongs to the GcvP family. N-terminal subunit subfamily. In terms of assembly, the glycine cleavage system is composed of four proteins: P, T, L and H. In this organism, the P 'protein' is a heterodimer of two subunits.

The enzyme catalyses N(6)-[(R)-lipoyl]-L-lysyl-[glycine-cleavage complex H protein] + glycine + H(+) = N(6)-[(R)-S(8)-aminomethyldihydrolipoyl]-L-lysyl-[glycine-cleavage complex H protein] + CO2. Functionally, the glycine cleavage system catalyzes the degradation of glycine. The P protein binds the alpha-amino group of glycine through its pyridoxal phosphate cofactor; CO(2) is released and the remaining methylamine moiety is then transferred to the lipoamide cofactor of the H protein. This is Probable glycine dehydrogenase (decarboxylating) subunit 1 from Francisella tularensis subsp. holarctica (strain LVS).